Consider the following 78-residue polypeptide: Large ribosomal subunit protein bL28 (78 aa).

It belongs to the bacterial ribosomal protein bL28 family.

This chain is Large ribosomal subunit protein bL28, found in Prochlorococcus marinus (strain AS9601).